Consider the following 57-residue polypeptide: DNA-directed RNA polymerase subunit Rpo6 (57 aa).

Belongs to the archaeal Rpo6/eukaryotic RPB6 RNA polymerase subunit family. Part of the RNA polymerase complex.

It is found in the cytoplasm. The enzyme catalyses RNA(n) + a ribonucleoside 5'-triphosphate = RNA(n+1) + diphosphate. Functionally, DNA-dependent RNA polymerase (RNAP) catalyzes the transcription of DNA into RNA using the four ribonucleoside triphosphates as substrates. This Thermococcus onnurineus (strain NA1) protein is DNA-directed RNA polymerase subunit Rpo6.